Consider the following 550-residue polypeptide: MCGIICFIQYGGQKIDLVSCLNCLDKLNNRGPDAQSYQVIELGDITIFLGFTRLAIMDTSEAGLQPFKDNNSNYSICNGEIYNYKNLAEKFNIEMQSQCDCEILLPLFNLRGFEGLLSDLDAEFATVIVDKYNSKLYAARDKYGVRPLYYGYNCEKGLIGFASELKALHSVMEYVEQVKPNQYVTIDLSFRPSIPFDLQNFVKLFQFTNYHEYYQSHKSLIDYHEPNIEQLQTSINHLLTEAVRKRLYADRQIGFLLSGGLDSSLIVAIATRLLGPTNIVCFSVGFEGSPDVAAAREVVKFLGIKNHHIVPFSVDIGLNAINDVIKTIETYDITTIRASTPQFIMAKYIQENTDIRVLLSGEGSDEIHGSYKYMRSAPNSQEFHKETIRLLEELYLFDNKRTDRTMAGNGLEVRVPFLDFNYVDFIMNIDPNLLMYKSDYIEKKIIRDAFKGYLPENILYRPKEAFSDAVSSKEINWYRSIQKITEEIYTDEKLQNSNYKFNKPEIKEALYYRDIFNSHYGGRDHIIPHYWLPRFQQNNVLDPSATILPI.

The active-site For GATase activity is cysteine 2. The Glutamine amidotransferase type-2 domain maps to 2–189; the sequence is CGIICFIQYG…PNQYVTIDLS (188 aa). Residues 53–57, 78–80, and aspartate 100 contribute to the L-glutamine site; these read RLAIM and NGE. The Asparagine synthetase domain maps to 213 to 530; that stretch reads YYQSHKSLID…GGRDHIIPHY (318 aa). ATP is bound by residues leucine 256, valine 284, and 360–361; that span reads SG.

The enzyme catalyses L-aspartate + L-glutamine + ATP + H2O = L-asparagine + L-glutamate + AMP + diphosphate + H(+). It participates in amino-acid biosynthesis; L-asparagine biosynthesis; L-asparagine from L-aspartate (L-Gln route): step 1/1. This is Probable asparagine synthetase [glutamine-hydrolyzing] from Acanthamoeba polyphaga mimivirus (APMV).